A 538-amino-acid polypeptide reads, in one-letter code: MNKPIKNIVIVGGGTAGWMAASYLVRALQQQANITLIESAAIPRIGVGEATIPSLQKVFFDFLGIPEREWMPQVNGAFKAAIKFVNWRKSPDPSRDDHFYHLFGNVPNCDGVPLTHYWLRKREQGFQQPMEYACYPQPGALDGKLAPCLSDGTRQMSHAWHFDAHLVADFLKRWAVERGVNRVVDEVVDVRLNNRGYISNLLTKEGRTLEADLFIDCSGMRGLLINQALKEPFIDMSDYLLCDSAVASAVPNDDARDGVEPYTSSIAMNSGWTWKIPMLGRFGSGYVFSSHFTSRDQATADFLKLWGLSDNQPLNQIKFRVGRNKRAWVNNCVSIGLSSCFLEPLESTGIYFIYAALYQLVKHFPDTSFDPRLSDAFNAEIVHMFDDCRDFVQAHYFTTSRDDTPFWLANRHDLRLSDAIKEKVQRYKAGLPLTTTSFDDSTYYETFDYEFKNFWLNGNYYCIFAGLGMLPDRSLPLLQHRPESIEKAEAMFASIRREAERLRTSLPTNYDYLRSLRDGDAGLSRGQRGPKLAAQESL.

Residues Gly-13, Thr-15, Ala-16, Ser-39, Ile-42, Ile-45, Glu-49, and Ala-50 each coordinate FAD. The active site involves Lys-79. Lys-79 lines the 7-chloro-L-tryptophan pocket. FAD-binding residues include Val-187 and Leu-337. Glu-346 contributes to the 7-chloro-L-tryptophan binding site. Glu-346 contributes to the L-tryptophan binding site. 2 residues coordinate chloride: Thr-348 and Gly-349. Position 350 (Ile-350) interacts with FAD. 7-chloro-L-tryptophan-binding residues include Tyr-443, Tyr-444, Glu-450, and Phe-454. Residues Tyr-443, Tyr-444, Glu-450, and Phe-454 each coordinate L-tryptophan.

This sequence belongs to the flavin-dependent halogenase family. Bacterial tryptophan halogenase subfamily. As to quaternary structure, homodimer.

It carries out the reaction L-tryptophan + FADH2 + chloride + O2 = 7-chloro-L-tryptophan + FAD + 2 H2O. The protein operates within antibiotic biosynthesis. Functionally, involved in the biosynthesis of the antifungal antibiotic pyrrolnitrin. Catalyzes the chlorination of tryptophan (Trp) at C7 position to yield 7-chloro-L-tryptophan (7-CLT). This chain is Tryptophan 7-halogenase PrnA, found in Pseudomonas fluorescens.